The following is a 452-amino-acid chain: Activating transcription factor 7-interacting protein 2 (452 aa).

Serine 184 carries the phosphoserine modification. A disordered region spans residues 185–206 (RSKRISSVNHTPLNSSEKAGRK). Serine 257 carries the phosphoserine modification. A Fibronectin type-III domain is found at 346-450 (PPQKPELKVK…IKSIPRFSEN (105 aa)).

It belongs to the MCAF family. As to quaternary structure, interacts with MBD1, SETDB1 and SP1. Probably forms a complex with SETDB1 and MBD1. Expressed in testis.

The protein localises to the nucleus. In terms of biological role, recruiter that couples transcriptional factors to general transcription apparatus and thereby modulates transcription regulation and chromatin formation. Can both act as an activator or a repressor depending on the context. Mediates MBD1-dependent transcriptional repression, probably by recruiting complexes containing SETDB1. The complex formed with MBD1 and SETDB1 represses transcription and probably couples DNA methylation and histone H3 'Lys-9' trimethylation (H3K9me3) activity. The protein is Activating transcription factor 7-interacting protein 2 (Atf7ip2) of Mus musculus (Mouse).